A 231-amino-acid polypeptide reads, in one-letter code: LexA repressor (231 aa).

The segment at residues 26–46 (FDEMKDALDLRSKSGIHRLIT) is a DNA-binding region (H-T-H motif). Catalysis depends on for autocatalytic cleavage activity residues Ser152 and Lys190.

Belongs to the peptidase S24 family. As to quaternary structure, homodimer.

The enzyme catalyses Hydrolysis of Ala-|-Gly bond in repressor LexA.. Functionally, represses a number of genes involved in the response to DNA damage (SOS response), including recA and lexA. In the presence of single-stranded DNA, RecA interacts with LexA causing an autocatalytic cleavage which disrupts the DNA-binding part of LexA, leading to derepression of the SOS regulon and eventually DNA repair. This is LexA repressor from Dinoroseobacter shibae (strain DSM 16493 / NCIMB 14021 / DFL 12).